The primary structure comprises 160 residues: Peptide methionine sulfoxide reductase MsrA (160 aa).

The active site involves Cys-11.

Belongs to the MsrA Met sulfoxide reductase family.

It catalyses the reaction L-methionyl-[protein] + [thioredoxin]-disulfide + H2O = L-methionyl-(S)-S-oxide-[protein] + [thioredoxin]-dithiol. The catalysed reaction is [thioredoxin]-disulfide + L-methionine + H2O = L-methionine (S)-S-oxide + [thioredoxin]-dithiol. Functionally, has an important function as a repair enzyme for proteins that have been inactivated by oxidation. Catalyzes the reversible oxidation-reduction of methionine sulfoxide in proteins to methionine. This is Peptide methionine sulfoxide reductase MsrA from Malacoplasma penetrans (strain HF-2) (Mycoplasma penetrans).